The following is a 476-amino-acid chain: MSFTVAIIGRPNVGKSTLFNRLVGKKLALVDDTPGVTRDRRPGDAKLVDLKFRIIDTAGLEESSPDSLQGRMWAQTEAAIDEADLSLFVVDAKAGLTPADQTLAEMLRRRGKPVVVVANKSEARGSEGGFYDAFTLGLGEPCPISAEHGQGMLDLRDAIVAALGEERAFPPAEDVAETNVDIRPVAGEGTEDEEVEPAYDETKPLRVAIVGRPNAGKSTLINRFLGEDRLLTGPEAGITRDSISVEWDWRGRTIKMFDTAGMRRKAKVQEKLEKLSVADALRAIRFAETVVIVFDATIPFEKQDLQIVDLVLREGRAAVLAFNKWDLVENWQALLVDLREKTERLLPQARGIRAVPISGHTGYGLDRLMQAIIETDKVWNRRISTARLNRWLESQQVQHPPPAVSGRRLKLKYMTQVKARPPGFMISCTRPEAVPESYTRYLINGLRNDFDLPGVPIRVHFRASENPFESKARKRR.

EngA-type G domains lie at phenylalanine 3–arginine 167 and leucine 205–asparagine 380. GTP contacts are provided by residues glycine 9–serine 16, aspartate 56–leucine 60, asparagine 119–glutamate 122, glycine 211–serine 218, aspartate 258–methionine 262, and asparagine 323–aspartate 326. In terms of domain architecture, KH-like spans arginine 381–glutamate 465.

It belongs to the TRAFAC class TrmE-Era-EngA-EngB-Septin-like GTPase superfamily. EngA (Der) GTPase family. Associates with the 50S ribosomal subunit.

In terms of biological role, GTPase that plays an essential role in the late steps of ribosome biogenesis. This Rhizobium meliloti (strain 1021) (Ensifer meliloti) protein is GTPase Der.